Reading from the N-terminus, the 206-residue chain is Large ribosomal subunit protein uL4 (206 aa).

The tract at residues 46–77 is disordered; that stretch reads GTRAQKDREQVRHSTKKPFKQKGTGNARAGMT.

The protein belongs to the universal ribosomal protein uL4 family. As to quaternary structure, part of the 50S ribosomal subunit.

Its function is as follows. One of the primary rRNA binding proteins, this protein initially binds near the 5'-end of the 23S rRNA. It is important during the early stages of 50S assembly. It makes multiple contacts with different domains of the 23S rRNA in the assembled 50S subunit and ribosome. Forms part of the polypeptide exit tunnel. This chain is Large ribosomal subunit protein uL4, found in Paracidovorax citrulli (strain AAC00-1) (Acidovorax citrulli).